A 316-amino-acid polypeptide reads, in one-letter code: Homoserine O-succinyltransferase (316 aa).

The active-site Acyl-thioester intermediate is the C142. 2 residues coordinate substrate: K163 and S192. The active-site Proton acceptor is the H235. The active site involves E237. R249 is a substrate binding site.

This sequence belongs to the MetA family.

The protein resides in the cytoplasm. It catalyses the reaction L-homoserine + succinyl-CoA = O-succinyl-L-homoserine + CoA. Its pathway is amino-acid biosynthesis; L-methionine biosynthesis via de novo pathway; O-succinyl-L-homoserine from L-homoserine: step 1/1. Transfers a succinyl group from succinyl-CoA to L-homoserine, forming succinyl-L-homoserine. The protein is Homoserine O-succinyltransferase of Shewanella amazonensis (strain ATCC BAA-1098 / SB2B).